The chain runs to 187 residues: Ribosome-recycling factor (187 aa).

This sequence belongs to the RRF family.

Its subcellular location is the cytoplasm. In terms of biological role, responsible for the release of ribosomes from messenger RNA at the termination of protein biosynthesis. May increase the efficiency of translation by recycling ribosomes from one round of translation to another. The sequence is that of Ribosome-recycling factor from Parabacteroides distasonis (strain ATCC 8503 / DSM 20701 / CIP 104284 / JCM 5825 / NCTC 11152).